Consider the following 151-residue polypeptide: Lipoprotein signal peptidase (151 aa).

2 helical membrane-spanning segments follow: residues 54–74 (GQMW…IYLI) and 83–103 (LLKI…IDRL). Active-site residues include Asp110 and Asp125. The helical transmembrane segment at 120–140 (IFNIADSALTIGVGLFLLNIL) threads the bilayer.

This sequence belongs to the peptidase A8 family.

It localises to the cell membrane. It catalyses the reaction Release of signal peptides from bacterial membrane prolipoproteins. Hydrolyzes -Xaa-Yaa-Zaa-|-(S,diacylglyceryl)Cys-, in which Xaa is hydrophobic (preferably Leu), and Yaa (Ala or Ser) and Zaa (Gly or Ala) have small, neutral side chains.. Its pathway is protein modification; lipoprotein biosynthesis (signal peptide cleavage). Functionally, this protein specifically catalyzes the removal of signal peptides from prolipoproteins. The chain is Lipoprotein signal peptidase from Shouchella clausii (strain KSM-K16) (Alkalihalobacillus clausii).